A 197-amino-acid chain; its full sequence is Large ribosomal subunit protein eL15 (197 aa).

3 stretches are compositionally biased toward basic residues: residues 70–90 (PKGGRRKSRPKKGRRPKRMGK), 163–179 (RGKTGAGKKARGLRKRG), and 187–197 (PSLRAHRRRGK). 2 disordered regions span residues 70–99 (PKGGRRKSRPKKGRRPKRMGKNKFSPGKSK) and 163–197 (RGKTGAGKKARGLRKRGKGAEKVRPSLRAHRRRGK).

This sequence belongs to the eukaryotic ribosomal protein eL15 family.

This is Large ribosomal subunit protein eL15 from Methanopyrus kandleri (strain AV19 / DSM 6324 / JCM 9639 / NBRC 100938).